We begin with the raw amino-acid sequence, 415 residues long: Dynein assembly factor with WD repeat domains 1 (415 aa).

WD repeat units follow at residues A90–T129, G132–R174, G175–T214, G217–T256, G259–T298, G301–K340, G343–E384, and H386–R415.

It belongs to the WD repeat WDR69 family. As to quaternary structure, interacts with IFT46.

It is found in the cytoplasm. The protein localises to the cytoskeleton. Its subcellular location is the flagellum basal body. The protein resides in the flagellum axoneme. Functionally, required for axonemal dynein assembly and ciliary motility in ciliated organs, including Kupffer's vesicle, during embryogenesis. Facilitates the onset of robust cilia motility during development. The polypeptide is Dynein assembly factor with WD repeat domains 1 (Daw1) (Rattus norvegicus (Rat)).